A 202-amino-acid polypeptide reads, in one-letter code: GPI-anchored hemophore cfmB (202 aa).

Residues M1 to A18 form the signal peptide. Residues Q19–T108 form the CFEM domain. 4 cysteine pairs are disulfide-bonded: C26–C67, C30–C62, C40–C48, and C50–C83. Residue D45 coordinates heme. The disordered stretch occupies residues P94 to A171. The span at A97–A171 shows a compositional bias: low complexity. N180 is lipidated: GPI-anchor amidated asparagine. Positions A181–L202 are cleaved as a propeptide — removed in mature form.

Belongs to the RBT5 family. In terms of processing, the GPI-anchor is attached to the protein in the endoplasmic reticulum and serves to target the protein to the cell surface. There, the glucosamine-inositol phospholipid moiety is cleaved off and the GPI-modified mannoprotein is covalently attached via its lipidless GPI glycan remnant to the 1,6-beta-glucan of the outer cell wall layer.

It localises to the secreted. The protein resides in the cell wall. The protein localises to the cell membrane. In terms of biological role, GPI-anchored cell wall protein involved in stabilizing the cell wall. Not implicated in virulence, heme uptake and biofilm formation. The sequence is that of GPI-anchored hemophore cfmB from Aspergillus fumigatus (strain ATCC MYA-4609 / CBS 101355 / FGSC A1100 / Af293) (Neosartorya fumigata).